The sequence spans 458 residues: Jacalin-related lectin 22 (458 aa).

Jacalin-type lectin domains are found at residues 5-153 (YRKL…YFVL), 160-301 (LYKL…YFGP), and 311-453 (SKKL…TIVP).

It belongs to the jacalin lectin family. In terms of assembly, component of the PYK10 complex, at least composed of PYK10/BGLU23, BGLU21, BGLU22, JAL22, JAL23, PBP1/JAL30, PBP2/JAL31, JAL32, JAL33, JAL34, JAL35, GLL22 and GLL23.

Functionally, inhibitor-type lectin that may regulate the correct polymerization and activation of BGLU23/PYK10 upon tissue damage. The sequence is that of Jacalin-related lectin 22 (JAL22) from Arabidopsis thaliana (Mouse-ear cress).